The primary structure comprises 125 residues: Somatostatin-2 (125 aa).

Positions 1 to 24 (MQCIRCPAILALLALVLCGPSVSS) are cleaved as a signal peptide. At Gln-25 the chain carries Pyrrolidone carboxylic acid. A propeptide spanning residues 25–97 (QLDREQSDNQ…ATGGRMNLER (73 aa)) is cleaved from the precursor. Residues 82-107 (AEDASMATGGRMNLERSVDSTNNLPP) form a disordered region. Cys-114 and Cys-125 are disulfide-bonded. Residue Lys-120 is modified to 5-hydroxylysine.

The protein belongs to the somatostatin family.

It is found in the secreted. Functionally, somatostatin inhibits the release of somatotropin. The sequence is that of Somatostatin-2 (sst2) from Lophius americanus (American angler).